The following is a 341-amino-acid chain: S-adenosylmethionine:tRNA ribosyltransferase-isomerase (341 aa).

It belongs to the QueA family. As to quaternary structure, monomer.

Its subcellular location is the cytoplasm. The catalysed reaction is 7-aminomethyl-7-carbaguanosine(34) in tRNA + S-adenosyl-L-methionine = epoxyqueuosine(34) in tRNA + adenine + L-methionine + 2 H(+). It participates in tRNA modification; tRNA-queuosine biosynthesis. In terms of biological role, transfers and isomerizes the ribose moiety from AdoMet to the 7-aminomethyl group of 7-deazaguanine (preQ1-tRNA) to give epoxyqueuosine (oQ-tRNA). This Clostridium botulinum (strain Loch Maree / Type A3) protein is S-adenosylmethionine:tRNA ribosyltransferase-isomerase.